The chain runs to 464 residues: UDP-N-acetylmuramoylalanine--D-glutamate ligase (464 aa).

Residue 112 to 118 coordinates ATP; it reads GTDGKTT.

It belongs to the MurCDEF family.

The protein resides in the cytoplasm. It carries out the reaction UDP-N-acetyl-alpha-D-muramoyl-L-alanine + D-glutamate + ATP = UDP-N-acetyl-alpha-D-muramoyl-L-alanyl-D-glutamate + ADP + phosphate + H(+). Its pathway is cell wall biogenesis; peptidoglycan biosynthesis. Its function is as follows. Cell wall formation. Catalyzes the addition of glutamate to the nucleotide precursor UDP-N-acetylmuramoyl-L-alanine (UMA). This Chlorobium phaeobacteroides (strain DSM 266 / SMG 266 / 2430) protein is UDP-N-acetylmuramoylalanine--D-glutamate ligase.